Consider the following 448-residue polypeptide: uncharacterized protein (448 aa).

The span at 187-198 (SKGDRGDADDRG) shows a compositional bias: basic and acidic residues. Disordered stretches follow at residues 187-221 (SKGD…LPTR), 243-270 (LQVP…GATM), and 291-361 (LSGL…LPNG). A compositionally biased stretch (low complexity) spans 243 to 261 (LQVPGGTSAAIPSASSTPS). The segment covering 307–334 (FDERGQEVRDPADYEHSNEPDERRADDR) has biased composition (basic and acidic residues).

This sequence to M.tuberculosis Rv0025 and Rv0739.

This is an uncharacterized protein from Mycobacterium tuberculosis (strain ATCC 25618 / H37Rv).